Reading from the N-terminus, the 400-residue chain is DNA primase small subunit PriS (400 aa).

Catalysis depends on residues aspartate 98, aspartate 100, and aspartate 306.

This sequence belongs to the eukaryotic-type primase small subunit family. Heterodimer of a small subunit (PriS) and a large subunit (PriL). Mg(2+) serves as cofactor. Mn(2+) is required as a cofactor.

Catalytic subunit of DNA primase, an RNA polymerase that catalyzes the synthesis of short RNA molecules used as primers for DNA polymerase during DNA replication. The small subunit contains the primase catalytic core and has DNA synthesis activity on its own. Binding to the large subunit stabilizes and modulates the activity, increasing the rate of DNA synthesis while decreasing the length of the DNA fragments, and conferring RNA synthesis capability. The DNA polymerase activity may enable DNA primase to also catalyze primer extension after primer synthesis. May also play a role in DNA repair. In Methanocella arvoryzae (strain DSM 22066 / NBRC 105507 / MRE50), this protein is DNA primase small subunit PriS.